A 641-amino-acid chain; its full sequence is Uromodulin (641 aa).

The N-terminal stretch at 1-24 is a signal peptide; the sequence is MGQPPLTWMLMVVVASWFITTAAT. N-linked (GlcNAc...) asparagine glycosylation is present at asparagine 25. Positions 28 to 64 constitute an EGF-like 1 domain; the sequence is EARWCSECHSNATCTEDEAVTTCTCQEGFTGDGLTCV. 21 disulfide bridges follow: cysteine 32–cysteine 41, cysteine 35–cysteine 50, cysteine 52–cysteine 63, cysteine 69–cysteine 83, cysteine 77–cysteine 92, cysteine 94–cysteine 106, cysteine 112–cysteine 126, cysteine 120–cysteine 135, cysteine 137–cysteine 148, cysteine 150–cysteine 161, cysteine 155–cysteine 170, cysteine 174–cysteine 267, cysteine 195–cysteine 282, cysteine 217–cysteine 255, cysteine 223–cysteine 287, cysteine 248–cysteine 256, cysteine 297–cysteine 306, cysteine 300–cysteine 315, cysteine 317–cysteine 347, cysteine 335–cysteine 425, and cysteine 366–cysteine 389. The EGF-like 2; calcium-binding domain maps to 65-107; that stretch reads DLDECAIPGAHNCSANSSCVNTPGSFSCVCPEGFRLSPGLGCT. Asparagine 76 carries an N-linked (GlcNAc...) asparagine glycan. Positions 108 to 149 constitute an EGF-like 3; calcium-binding domain; it reads DVDECAEPGLSHCHALATCVNVVGNYLCVCPAGYRGDGWHCE. A beta hairpin region spans residues 150 to 171; that stretch reads CSPGSCGPGLDCVPEGDALVCA. Residues 172 to 291 are D10C; it reads DPCQAHRTLD…CHLAYCTDPS (120 aa). N-linked (GlcNAc...) asparagine glycosylation occurs at asparagine 232. A glycan (N-linked (GlcNAc...) asparagine) is linked at asparagine 275. Residues 292–323 form the EGF-like 4 domain; that stretch reads SVEGTCEECSIDEDCKSDNGRWHCQCKQDFNI. N-linked (GlcNAc...) asparagine glycosylation occurs at asparagine 322. A ZP-N region spans residues 334-429; it reads ECGANDMKVS…KINFACSYPL (96 aa). The 256-residue stretch at 334-589 folds into the ZP domain; that stretch reads ECGANDMKVS…PTCSGTRFRS (256 aa). The segment at 430–453 is flexible ZP-N/ZP-C linker; important for secretion and polymerization into filaments; the sequence is DMKVSLKTSLQPVVSALNITVGGT. N-linked (GlcNAc...) asparagine glycosylation is present at asparagine 447. Residues 454 to 464 form an internal hydrophobic patch (IHP) region; the sequence is GMFTVRMALFQ. The tract at residues 454–589 is ZP-C; the sequence is GMFTVRMALF…PTCSGTRFRS (136 aa). 3 disulfides stabilise this stretch: cysteine 506–cysteine 566, cysteine 527–cysteine 582, and cysteine 571–cysteine 578. The tract at residues 586-589 is essential for cleavage by HPN; it reads RFRS. An external hydrophobic patch (EHP); regulates polymerization into filaments region spans residues 598 to 606; that stretch reads VLNLGPITR. A lipid anchor (GPI-anchor amidated serine) is attached at serine 614. A propeptide spans 615-641 (removed in mature form); that stretch reads RAAFSSLGLLKVWLPLLLSATLTLTFQ.

In terms of assembly, homodimer that then polymerizes into long filaments. The filaments can additionally assemble laterally to form a sheet. The filaments consist of a zigzag-shaped backbone with laterally protruding arms which interact with bacterial adhesin fimH. Two fimH molecules can bind to a single UMOD monomer. Post-translationally, N-glycosylated. Proteolytically cleaved at a conserved C-terminal proteolytic cleavage site to generate the secreted form found in urine. This cleavage is catalyzed by HPN.

It is found in the apical cell membrane. Its subcellular location is the basolateral cell membrane. The protein resides in the cell projection. It localises to the cilium membrane. The protein localises to the secreted. Functionally, functions in biogenesis and organization of the apical membrane of epithelial cells of the thick ascending limb of Henle's loop (TALH), where it promotes formation of complex filamentous gel-like structure that may play a role in the water barrier permeability. May serve as a receptor for binding and endocytosis of cytokines (IL-1, IL-2) and TNF. Facilitates neutrophil migration across renal epithelia. Its function is as follows. In the urine, may contribute to colloid osmotic pressure, retards passage of positively charged electrolytes, and inhibits formation of liquid containing supersaturated salts and subsequent formation of salt crystals. Protects against urinary tract infections by binding to type 1 fimbriated E.coli. Binds to bacterial adhesin fimH which mediates the stable formation of bacterial aggregates, prevents the binding of E.coli to uroplakins UPK1A and UPK1B which act as urothelial receptors for type I fimbriae, and allows for pathogen clearance through micturation. Also promotes aggregation of other bacteria including K.pneumoniae, P.aeruginosa and S.mitis and so may also protect against other uropathogens. The chain is Uromodulin (UMOD) from Pongo abelii (Sumatran orangutan).